Reading from the N-terminus, the 177-residue chain is Adenine phosphoribosyltransferase (177 aa).

The protein belongs to the purine/pyrimidine phosphoribosyltransferase family. As to quaternary structure, homodimer.

It is found in the cytoplasm. It carries out the reaction AMP + diphosphate = 5-phospho-alpha-D-ribose 1-diphosphate + adenine. The protein operates within purine metabolism; AMP biosynthesis via salvage pathway; AMP from adenine: step 1/1. Catalyzes a salvage reaction resulting in the formation of AMP, that is energically less costly than de novo synthesis. This Cutibacterium acnes (strain DSM 16379 / KPA171202) (Propionibacterium acnes) protein is Adenine phosphoribosyltransferase.